Here is a 948-residue protein sequence, read N- to C-terminus: MLTPDNKLMSETETAWERYKEVVESITLTAEQEQILRALFAVSPFIGRVAESYPEHLVTDFFDGSGSSVRLIDADSYGDRIAESLSQVTNEDEAKKCLRRLRHCWMAKLAAADILQQVSLKESLHHYSTFADAAINKSLEWLFERFVQRHGKPLDANDQLMPMLVIGMGKLGGKELNFSSDIDLIFAFPEQGETQGPGRNLEHGVFYKRLAQSLIGLLDETTADGQVFRVDMRLRPFGQSGPLVTSLNALEHYYQEQGRDWERYAMVKARMIGADEQYEQAFQQLIRPFVYRRYIDFGAIEALRKMKLLITQETRRQGVKNNIKLGAGGIREVEFIVQAHQLIRGGQEKSLQTRSVYIAMNGLVELDLIDPEHARQLLKDYEYLRVIEHRLQQIDDQQTQQLPTDETGRMRLCAMLNEPEWETLQRKIDECMERIHAEFQQVVGAESEDDEDEQGLQVLWQDMLDDDAALEIIESEGVDEPQALWTLIKNFRQESRRRSSGPRGRSALARLMPIMLRHAIQHQHPERLLERLLSIIKAVMSRTAYIELLAENPGAREQLCKLCMASPWISEQLALHPILLDELIDPQQLYSLPESKDYAAVLREYLMRIPEQDLETQMDALRQAKQALQLKIAAADISGVLELMNVSDHLSALAEAIISEVVGLAWQHLTQKHGKPAGTCLDNTGFAVLGYGKLGGQELGYGSDLDLVFVTDANYQGQTDGQRPIEVQQFYLRLAQRILHLFTTRTVAGILYDVDLRLRPSGQAGLLVTQVNSFARYLRDDAWTWELQALVRARPVYGVPALRDTVMDIRRSVLSQKRDEQELRQSIVKMREKMREHLTQRNSRKFDLKQDPGGIADIEFITQYLVLRYAHKYPELCKYSDNVRLLTEAQQLHLLTEVDAQNLINAFQIFRCESHSLALQGEQLLEEHNLDNERQAVLNCWNHLLEDD.

The adenylyl removase stretch occupies residues 1–447 (MLTPDNKLMS…EFQQVVGAES (447 aa)). Residues 453–948 (EQGLQVLWQD…NCWNHLLEDD (496 aa)) form an adenylyl transferase region.

It belongs to the GlnE family. It depends on Mg(2+) as a cofactor.

The catalysed reaction is [glutamine synthetase]-O(4)-(5'-adenylyl)-L-tyrosine + phosphate = [glutamine synthetase]-L-tyrosine + ADP. The enzyme catalyses [glutamine synthetase]-L-tyrosine + ATP = [glutamine synthetase]-O(4)-(5'-adenylyl)-L-tyrosine + diphosphate. Involved in the regulation of glutamine synthetase GlnA, a key enzyme in the process to assimilate ammonia. When cellular nitrogen levels are high, the C-terminal adenylyl transferase (AT) inactivates GlnA by covalent transfer of an adenylyl group from ATP to specific tyrosine residue of GlnA, thus reducing its activity. Conversely, when nitrogen levels are low, the N-terminal adenylyl removase (AR) activates GlnA by removing the adenylyl group by phosphorolysis, increasing its activity. The regulatory region of GlnE binds the signal transduction protein PII (GlnB) which indicates the nitrogen status of the cell. In Idiomarina loihiensis (strain ATCC BAA-735 / DSM 15497 / L2-TR), this protein is Bifunctional glutamine synthetase adenylyltransferase/adenylyl-removing enzyme.